Here is a 249-residue protein sequence, read N- to C-terminus: Protein ZPS1 (249 aa).

Residues 1–20 (MKFSSGKSIIFATIASLALS) form the signal peptide. Residues Asn28, Asn57, Asn98, and Asn217 are each glycosylated (N-linked (GlcNAc...) asparagine).

Belongs to the ZPS1 family.

The protein is Protein ZPS1 (ZPS1) of Saccharomyces cerevisiae (strain ATCC 204508 / S288c) (Baker's yeast).